A 181-amino-acid polypeptide reads, in one-letter code: NAD(P)H-quinone oxidoreductase subunit I, chloroplastic (181 aa).

2 4Fe-4S ferredoxin-type domains span residues 52–81 (GRIH…VDWE) and 92–121 (KSYS…MTEE). Residues Cys-61, Cys-64, Cys-67, Cys-71, Cys-101, Cys-104, Cys-107, and Cys-111 each contribute to the [4Fe-4S] cluster site.

Belongs to the complex I 23 kDa subunit family. NDH is composed of at least 16 different subunits, 5 of which are encoded in the nucleus. Requires [4Fe-4S] cluster as cofactor.

It localises to the plastid. It is found in the chloroplast thylakoid membrane. It carries out the reaction a plastoquinone + NADH + (n+1) H(+)(in) = a plastoquinol + NAD(+) + n H(+)(out). The catalysed reaction is a plastoquinone + NADPH + (n+1) H(+)(in) = a plastoquinol + NADP(+) + n H(+)(out). In terms of biological role, NDH shuttles electrons from NAD(P)H:plastoquinone, via FMN and iron-sulfur (Fe-S) centers, to quinones in the photosynthetic chain and possibly in a chloroplast respiratory chain. The immediate electron acceptor for the enzyme in this species is believed to be plastoquinone. Couples the redox reaction to proton translocation, and thus conserves the redox energy in a proton gradient. The protein is NAD(P)H-quinone oxidoreductase subunit I, chloroplastic of Staurastrum punctulatum (Green alga).